Reading from the N-terminus, the 528-residue chain is Ribonuclease Y (528 aa).

A helical transmembrane segment spans residues 15 to 35 (SLLVFALICGSIIGYFLYSFF). In terms of domain architecture, KH spans 217-277 (NISVVNIPNE…IRREIAKKTL (61 aa)). In terms of domain architecture, HD spans 343-436 (VLKHSLEVAF…VAIADTLSSA (94 aa)).

Belongs to the RNase Y family.

The protein resides in the cell membrane. Its function is as follows. Endoribonuclease that initiates mRNA decay. The polypeptide is Ribonuclease Y (Onion yellows phytoplasma (strain OY-M)).